We begin with the raw amino-acid sequence, 244 residues long: Probable septum site-determining protein MinC (244 aa).

This sequence belongs to the MinC family. In terms of assembly, interacts with MinD and FtsZ.

Its function is as follows. Cell division inhibitor that blocks the formation of polar Z ring septums. Rapidly oscillates between the poles of the cell to destabilize FtsZ filaments that have formed before they mature into polar Z rings. Prevents FtsZ polymerization. The polypeptide is Probable septum site-determining protein MinC (Dichelobacter nodosus (strain VCS1703A)).